The sequence spans 31 residues: MLTITSYFGFLLAALTITSALFIGLNKIRLI.

The chain crosses the membrane as a helical span at residues 4–24 (ITSYFGFLLAALTITSALFIG).

It belongs to the PetL family. As to quaternary structure, the 4 large subunits of the cytochrome b6-f complex are cytochrome b6, subunit IV (17 kDa polypeptide, PetD), cytochrome f and the Rieske protein, while the 4 small subunits are PetG, PetL, PetM and PetN. The complex functions as a dimer.

The protein resides in the plastid. Its subcellular location is the chloroplast thylakoid membrane. Component of the cytochrome b6-f complex, which mediates electron transfer between photosystem II (PSII) and photosystem I (PSI), cyclic electron flow around PSI, and state transitions. PetL is important for photoautotrophic growth as well as for electron transfer efficiency and stability of the cytochrome b6-f complex. The protein is Cytochrome b6-f complex subunit 6 of Coffea arabica (Arabian coffee).